A 225-amino-acid chain; its full sequence is PKHD-type hydroxylase YbiX (225 aa).

Residues T78 to S177 enclose the Fe2OG dioxygenase domain. 3 residues coordinate Fe cation: H96, D98, and H158. R168 contacts 2-oxoglutarate.

The cofactor is Fe(2+). Requires L-ascorbate as cofactor.

This Shigella sonnei (strain Ss046) protein is PKHD-type hydroxylase YbiX.